Reading from the N-terminus, the 207-residue chain is Holliday junction branch migration complex subunit RuvA (207 aa).

A domain I region spans residues Met1–Leu68. The domain II stretch occupies residues Gln69 to Pro147. The tract at residues Ser148–Gln158 is flexible linker. The segment at Gln158 to Arg207 is domain III.

Belongs to the RuvA family. In terms of assembly, homotetramer. Forms an RuvA(8)-RuvB(12)-Holliday junction (HJ) complex. HJ DNA is sandwiched between 2 RuvA tetramers; dsDNA enters through RuvA and exits via RuvB. An RuvB hexamer assembles on each DNA strand where it exits the tetramer. Each RuvB hexamer is contacted by two RuvA subunits (via domain III) on 2 adjacent RuvB subunits; this complex drives branch migration. In the full resolvosome a probable DNA-RuvA(4)-RuvB(12)-RuvC(2) complex forms which resolves the HJ.

It localises to the cytoplasm. In terms of biological role, the RuvA-RuvB-RuvC complex processes Holliday junction (HJ) DNA during genetic recombination and DNA repair, while the RuvA-RuvB complex plays an important role in the rescue of blocked DNA replication forks via replication fork reversal (RFR). RuvA specifically binds to HJ cruciform DNA, conferring on it an open structure. The RuvB hexamer acts as an ATP-dependent pump, pulling dsDNA into and through the RuvAB complex. HJ branch migration allows RuvC to scan DNA until it finds its consensus sequence, where it cleaves and resolves the cruciform DNA. The chain is Holliday junction branch migration complex subunit RuvA from Synechococcus elongatus (strain ATCC 33912 / PCC 7942 / FACHB-805) (Anacystis nidulans R2).